Reading from the N-terminus, the 250-residue chain is Small ribosomal subunit protein uS2 (250 aa).

The interval 225 to 250 is disordered; it reads GAQGGRQARGEDLGAAVEAPSEDALA.

This sequence belongs to the universal ribosomal protein uS2 family.

The protein is Small ribosomal subunit protein uS2 of Rhizorhabdus wittichii (strain DSM 6014 / CCUG 31198 / JCM 15750 / NBRC 105917 / EY 4224 / RW1) (Sphingomonas wittichii).